The following is a 413-amino-acid chain: uncharacterized protein (413 aa).

This is an uncharacterized protein from Mycobacterium tuberculosis (strain ATCC 25618 / H37Rv).